We begin with the raw amino-acid sequence, 322 residues long: Solute carrier family 35 member B1 (322 aa).

8 helical membrane passes run 12–32 (LRLP…GILQ), 51–71 (FALT…KILI), 85–105 (WLYA…NSAL), 136–156 (YPMA…LFMY), 168–188 (TIGY…LTGV), 210–230 (LWST…WEFL), 243–263 (ILLF…TVVY), and 285–305 (VILF…LVFL). Residues 318 to 322 (KKTSH) carry the Di-lysine motif motif.

This sequence belongs to the nucleotide-sugar transporter family. SLC35B subfamily.

Its subcellular location is the endoplasmic reticulum membrane. The catalysed reaction is ADP(in) + ATP(out) = ADP(out) + ATP(in). The enzyme catalyses UDP(out) + ATP(in) = UDP(in) + ATP(out). It carries out the reaction UTP(out) + ATP(in) = UTP(in) + ATP(out). It catalyses the reaction dATP(out) + ATP(in) = dATP(in) + ATP(out). Its function is as follows. ATP:ADP antiporter that catalyzes the exchange of ATP and ADP across the endoplasmic reticulum (ER) membrane. Imports ATP from the cytosol to the ER lumen and exports ADP in the opposite direction. Regulates ER energy metabolism and protein biogenesis. Appears to be part of a calcium-dependent ER to cytosol low energy response axis, where calcium efflux from ER to the cytosol triggers ATP import into the ER lumen to maintain sufficient ATP supply. Provides ATP to ER chaperone HSPA5 that drives protein folding and trafficking in the ER. Can transport dATP, UTP or UDP in exchange for ATP, but the physiological relevance of this process remains to be established. The chain is Solute carrier family 35 member B1 (SLC35B1) from Bos taurus (Bovine).